We begin with the raw amino-acid sequence, 248 residues long: UPF0173 metal-dependent hydrolase Hlac_1347 (248 aa).

This sequence belongs to the UPF0173 family.

The polypeptide is UPF0173 metal-dependent hydrolase Hlac_1347 (Halorubrum lacusprofundi (strain ATCC 49239 / DSM 5036 / JCM 8891 / ACAM 34)).